The following is a 430-amino-acid chain: Histidine--tRNA ligase (430 aa).

Belongs to the class-II aminoacyl-tRNA synthetase family. As to quaternary structure, homodimer.

Its subcellular location is the cytoplasm. It carries out the reaction tRNA(His) + L-histidine + ATP = L-histidyl-tRNA(His) + AMP + diphosphate + H(+). The protein is Histidine--tRNA ligase of Acinetobacter baumannii (strain AB307-0294).